Here is a 435-residue protein sequence, read N- to C-terminus: Matrix extracellular phosphoglycoprotein (435 aa).

Positions 1 to 16 (MQAVSVGLFLFSMTWA) are cleaved as a signal peptide. The N-linked (GlcNAc...) asparagine glycan is linked to N71. 2 disordered regions span residues 124-145 (LLQN…THYL) and 166-435 (LLVR…SSGD). A dentonin region spans residues 164–186 (PDLLVRGDNDVPPFSGDGQHFMH). A Cell attachment site motif is present at residues 169 to 171 (RGD). Residue S178 is glycosylated (O-linked (Xyl...) (chondroitin sulfate) serine). 2 stretches are compositionally biased toward basic and acidic residues: residues 267-278 (KFRELPGKEGNR) and 300-313 (SKEK…EHTG). The segment covering 337–346 (GNQVTLTESQ) has biased composition (polar residues). 2 stretches are compositionally biased toward basic residues: residues 382 to 391 (AHRRTSHPTR) and 405 to 415 (RRPHPHRRVST). The segment at 418-435 (RDSSESSSSGSSSESSGD) is ASARM motif; interaction with PHEX. Over residues 422-435 (ESSSSGSSSESSGD) the composition is skewed to low complexity.

This sequence belongs to the PF07175/osteoregulin family. Interacts (via ASARM motif) with PHEX; the interaction is zinc-dependent. Post-translationally, phosphorylated on serine residues in the ASARM motif; the phosphorylation is important for the inhibition of bone mineralization. In terms of processing, cleaved by CTSB/cathepsin B; the cleavage is blocked by metalloprotease PHEX. Expressed in osteoblasts and osteocytes.

The protein resides in the secreted. The protein localises to the extracellular space. Its subcellular location is the extracellular matrix. Functionally, regulates renal phosphate excretion. Regulates bone mineralization by osteoblasts and cartilage mineralization by chondrocytes. Regulates the mineralization of the extracellular matrix of the craniofacial complex, such as teeth, bone and cartilage. Increases dental pulp stem cell proliferation. This is Matrix extracellular phosphoglycoprotein from Rattus norvegicus (Rat).